The chain runs to 410 residues: UBX domain-containing protein 3 (410 aa).

Disordered stretches follow at residues 46 to 139 (EEDH…PDPK) and 154 to 212 (TISP…EKPL). Low complexity predominate over residues 65 to 85 (GSSSGISGGDQQPPRPLQRQQ). Positions 86–97 (NTQGQGMKSGTA) are enriched in polar residues. Residues serine 156, serine 167, and serine 186 each carry the phosphoserine modification. Residues 163 to 174 (SGPSSLASSWAS) show a composition bias toward low complexity. Polar residues predominate over residues 183–196 (NEASGSTTPVTQSG). Residue threonine 190 is modified to Phosphothreonine. Positions 211–276 (PLRRTLYFWR…VQHRMDEDYV (66 aa)) constitute an SEP domain. The 77-residue stretch at 334 to 410 (ENKPTTRIQV…KNASLVQKSL (77 aa)) folds into the UBX domain.

Interacts with cdc48.

In terms of biological role, involved in CDC48-dependent protein degradation through the ubiquitin/proteasome pathway. Involved in delivery of substrates to the 26S proteasome. Also required for membrane fusion and sporulation. This is UBX domain-containing protein 3 (ubx3) from Schizosaccharomyces pombe (strain 972 / ATCC 24843) (Fission yeast).